A 119-amino-acid polypeptide reads, in one-letter code: DNA-binding protein inhibitor ID-3 (119 aa).

The bHLH domain maps to 28–80; that stretch reads RGKSPAAEEPLSLLDDMNHCYSRLRELVPGVPRGTQLSQVEILQRVIDYILDL.

In terms of assembly, homodimer, and heterodimer with other HLH proteins. Interacts with COPS5 and COPS7A. Interacts with IFI204. Interacts with GATA4 and NKX2-5. Interacts with ANKRD2; both proteins cooperate in myoblast differentiation. Interacts with CLOCK and BMAL1.

It localises to the nucleus. Its function is as follows. Transcriptional regulator (lacking a basic DNA binding domain) which negatively regulates the basic helix-loop-helix (bHLH) transcription factors by forming heterodimers and inhibiting their DNA binding and transcriptional activity. Implicated in regulating a variety of cellular processes, including cellular growth, senescence, differentiation, apoptosis, angiogenesis, and neoplastic transformation. Involved in myogenesis by inhibiting skeletal muscle and cardiac myocyte differentiation and promoting muscle precursor cells proliferation. Inhibits the binding of E2A-containing protein complexes to muscle creatine kinase E-box enhancer. Regulates the circadian clock by repressing the transcriptional activator activity of the CLOCK-BMAL1 heterodimer. This chain is DNA-binding protein inhibitor ID-3 (ID3), found in Bos taurus (Bovine).